A 432-amino-acid polypeptide reads, in one-letter code: D-amino acid dehydrogenase (432 aa).

3–17 (VVILGSGVVGVTSAW) serves as a coordination point for FAD.

This sequence belongs to the DadA oxidoreductase family. FAD is required as a cofactor.

It localises to the cell inner membrane. The enzyme catalyses a D-alpha-amino acid + A + H2O = a 2-oxocarboxylate + AH2 + NH4(+). It participates in amino-acid degradation; D-alanine degradation; NH(3) and pyruvate from D-alanine: step 1/1. Functionally, oxidative deamination of D-amino acids. The chain is D-amino acid dehydrogenase from Salmonella typhi.